A 1230-amino-acid polypeptide reads, in one-letter code: Cullin-associated NEDD8-dissociated protein 1 (1230 aa).

Position 2 is an N-acetylalanine (alanine 2). HEAT repeat units follow at residues 2–39 (ASASYHISNLLEKMTSSDKDFRFMATNDLMTELQKDSI), 44–81 (DSERKVVKMILRLLEDKNGEVQNLAVKCLGPLVSKVKE), 83–119 (QVETIVDTLCTNMLSDKEQLRDISSIGLKTVIGELPP), 131–165 (CKKITGRLTSAIAKQEDVSVQLEALDIMADMLSRQ), 171–208 (NFHPSILTCLLPQLTSPRLAVRKRTIIALGHLVMSCGN), 210–247 (VFVDLIEHLLSELSKNDSMSTTRTYIQCIAAISRQAGH), 248–282 (RIGEYLEKIIPLVVKFCNVDDDELREYCIQAFESF), 289–366 (EVYP…TRHE), 370–407 (EFYKTVSPALIARFKEREENVKADVFHAYLSLLKQTRP), 424–467 (PLTM…VLPG), 471–510 (QHIPVLVPGIIFSLNDKSSSSNLKIDALSCLYVILCNHSP), and 515–552 (PHVQALVPPVVACVGDPFYKITSEALLVTQQLVKVIRP). A disordered region spans residues 315 to 344 (DEDEDENAMDADGGDDDDQGSDDEYSDDDD). Position 335 is a phosphoserine (serine 335). Phosphoserine is present on serine 558. HEAT repeat units follow at residues 563 to 602 (PYIKDLFTCTIKRLKAADIDQEVKERAISCMGQIICNLGD), 606 to 643 (PDLSNTLQIFLERLKNEITRLTTVKALTLIAGSPLKID), 646 to 683 (PVLGEGVPILASFLRKNQRALKLGTLSALDILIKNYSD), 688 to 725 (AMIDAVLDELPPLISESDMHVSQMAISFLTTLAKVYPS), 729 to 768 (KISGSILNELIGLVRSPLLQGGALSAMLDFFQALVVTGTN), 770 to 808 (LGYMDLLRMLTGPVYSQSTALTHKQSYYSIAKCVAALTR), 809 to 845 (ACPKEGPAVVGQFIQDVKNSRSTDSIRLLALLSLGEV), 852 to 889 (SGQLELKSVILEAFSSPSEEVKSAASYALGSISVGNLP), 890 to 927 (EYLPFVLQEITSQPKRQYLLLHSLKEIISSASVAGLKP), 928 to 960 (YVENIWALLLKHCECAEEGTRNVVAECLGKLTL), 961 to 998 (IDPETLLPRLKGYLISGSSYARSSVVTAVKFTISDHPQ), 1002 to 1039 (PLLKNCIGDFLKTLEDPDLNVRRVALVTFNSAAHNKPS), 1043 to 1097 (DLLD…DSCL), 1099 to 1133 (RLDIFEFLNHVEDGLKDHYDIKMLTFLMLVRLSTL), and 1140 to 1189 (QRLD…IPEA). Position 971 is an N6-acetyllysine (lysine 971).

The protein belongs to the CAND family. As to quaternary structure, interacts with TBP. Part of a complex that contains CUL1 and RBX1. Interacts with unneddylated cullins: interacts with CUL1, CUL2, CUL3, CUL4A, CUL4B and CUL5. Does not bind neddylated CUL1. Interaction with cullins is abolished in presence of COMMD1, which antagonizes with CAND1 for interacting with cullins. Interacts with ERCC6. Interacts with DCUN1D1, DCUN1D2, DCUN1D3, DCUN1D4 and DCUN1D5; these interactions are bridged by cullins and strongly inhibits the neddylation of cullins.

It is found in the cytoplasm. The protein localises to the nucleus. Its function is as follows. Key assembly factor of SCF (SKP1-CUL1-F-box protein) E3 ubiquitin ligase complexes that promotes the exchange of the substrate-recognition F-box subunit in SCF complexes, thereby playing a key role in the cellular repertoire of SCF complexes. Acts as a F-box protein exchange factor. The exchange activity of CAND1 is coupled with cycles of neddylation conjugation: in the deneddylated state, cullin-binding CAND1 binds CUL1-RBX1, increasing dissociation of the SCF complex and promoting exchange of the F-box protein. Probably plays a similar role in other cullin-RING E3 ubiquitin ligase complexes. This Mus musculus (Mouse) protein is Cullin-associated NEDD8-dissociated protein 1 (Cand1).